The chain runs to 504 residues: NADH-quinone oxidoreductase subunit N (504 aa).

The next 14 membrane-spanning stretches (helical) occupy residues 9–29 (IALL…LSII), 38–58 (AVLT…HMMW), 78–98 (VLYV…GYVW), 114–134 (LLIA…IVLF), 135–155 (LGIE…VFSK), 164–184 (YIIL…FIYC), 216–236 (IVIG…CVPF), 254–274 (YLAT…LLIL), 282–302 (LHIF…LMAI), 309–329 (RMLA…LIAL), 341–361 (ISVY…IVNI), 392–412 (VIFV…GFIG), 425–447 (LWFL…LKII), and 476–496 (FMVI…QFIV).

This sequence belongs to the complex I subunit 2 family. As to quaternary structure, NDH-1 is composed of 13 different subunits. Subunits NuoA, H, J, K, L, M, N constitute the membrane sector of the complex.

It localises to the cell inner membrane. The enzyme catalyses a quinone + NADH + 5 H(+)(in) = a quinol + NAD(+) + 4 H(+)(out). Functionally, NDH-1 shuttles electrons from NADH, via FMN and iron-sulfur (Fe-S) centers, to quinones in the respiratory chain. The immediate electron acceptor for the enzyme in this species is believed to be ubiquinone. Couples the redox reaction to proton translocation (for every two electrons transferred, four hydrogen ions are translocated across the cytoplasmic membrane), and thus conserves the redox energy in a proton gradient. This chain is NADH-quinone oxidoreductase subunit N, found in Blochmanniella floridana.